The chain runs to 2431 residues: Nucleoprotein TPR (2431 aa).

Residues 1 to 48 form a disordered region; sequence MTSGGSASRSGHRGVPMTSRGFDGSRRGSLRRAGARETASEAADGAAP. The tract at residues 77–87 is sufficient for interaction with TPR; sequence AVLQQVLERPE. Positions 88 to 191 are necessary for interaction with HSF1; it reads LNKLPKSTQN…GIQSQFTRAK (104 aa). Residues 98–444 are a coiled coil; the sequence is KLEKFLAEQQ…SATKRKGAIL (347 aa). K326, K386, and K419 each carry N6-acetyllysine. Position 453 is a phosphoserine (S453). A coiled-coil region spans residues 486–678; sequence EKQENKRINK…ESRQHQMQLV (193 aa). 3 positions are modified to N6-acetyllysine: K502, K531, and K551. Residues 511–587 are necessary for association to the NPC; it reads LKRQREEYER…LMELEEARGN (77 aa). Phosphoserine is present on residues S596, S597, and S706. The stretch at 736 to 1246 forms a coiled coil; that stretch reads STEAIEAKAA…IEKLSDKVVT (511 aa). 4 positions are modified to N6-acetyllysine: K787, K797, K822, and K829. The segment covering 989–998 has biased composition (polar residues); that stretch reads LASQSTQRTG. Positions 989-1011 are disordered; that stretch reads LASQSTQRTGKGQPGDRDDVDDL. Over residues 1002-1011 the composition is skewed to basic and acidic residues; the sequence is PGDRDDVDDL. The residue at position 1259 (S1259) is a Phosphoserine. 2 coiled-coil regions span residues 1289 to 1494 and 1547 to 1700; these read EVAQ…LDAK and VQEM…QRDE. The necessary for interaction with HSF1 stretch occupies residues 1292–1394; sequence QVESLRYRQR…NAELSEKSGM (103 aa). Over residues 1689–1701 the composition is skewed to basic and acidic residues; the sequence is EHQERHLEQRDEP. Residues 1689 to 1744 are disordered; that stretch reads EHQERHLEQRDEPQEPTNKAPEQQRQITLKTTPASGERGIASTSDPPTANIKPTPV. Positions 1703–1722 are enriched in polar residues; the sequence is EPTNKAPEQQRQITLKTTPA. K1760 carries the post-translational modification N6-acetyllysine. At T1762 the chain carries Phosphothreonine. Over residues 1873-1898 the composition is skewed to polar residues; that stretch reads SSPVERPSTSTAVFGTVSATPSSSLP. The interval 1873–2193 is disordered; the sequence is SSPVERPSTS…TPGIGGMQQH (321 aa). The sufficient and essential for mediating its nuclear import stretch occupies residues 1882-1937; the sequence is STAVFGTVSATPSSSLPKRTREEEEDSTMEAGDQVSEDTVEMPLPKKLKMVTPVGT. Positions 1937–1951 are enriched in acidic residues; it reads TEEEVMAEESTDGEA. Over residues 1954-1963 the composition is skewed to polar residues; the sequence is QAYNQDSQDS. Position 1963 is a phosphoserine (S1963). Positions 1994-2005 are enriched in low complexity; it reads QSDQQTTSSQDG. Composition is skewed to acidic residues over residues 2016 to 2057 and 2067 to 2088; these read DSDD…EDSN and DGYE…ETEE. Polar residues predominate over residues 2100–2132; it reads ADSQNSGEGNTSAAESSFSQEVAREQQPTSASE. S2102, S2105, S2116, S2118, and S2141 each carry phosphoserine. Residues R2174 and R2179 each carry the omega-N-methylarginine modification. A phosphothreonine mark is found at T2184 and T2205. S2223 carries the post-translational modification Phosphoserine. Position 2231 is an omega-N-methylarginine (R2231). Residues 2295 to 2312 show a composition bias toward polar residues; the sequence is ESTTSDASEHASQSVPMV. Residues 2295-2431 form a disordered region; it reads ESTTSDASEH…RGGINRGNIN (137 aa). The span at 2313 to 2325 shows a compositional bias: low complexity; sequence TTSTGTLSTTNET. The segment covering 2327 to 2340 has biased composition (acidic residues); sequence AGDDGDEVFVEAES. Residues 2341-2351 are compositionally biased toward low complexity; that stretch reads EGISSEAGLEI. The span at 2353–2367 shows a compositional bias: acidic residues; the sequence is SQQEEEPVQASDESD. The span at 2368-2388 shows a compositional bias: low complexity; the sequence is LPSTSQDPPSSSSVDTSSSQP. Asymmetric dimethylarginine occurs at positions 2411, 2413, and 2422. Positions 2420-2431 are enriched in gly residues; it reads GGRGGINRGNIN.

Belongs to the TPR family. In terms of assembly, homodimer. Part of the nuclear pore complex (NPC). Associates with the XPO1/CRM1-mediated nuclear export complex, the Importin alpha/Importin beta receptor and the dynein 1 complex. Interacts (via C-terminal domain) with the KPNB1; the interaction occurs in a RanGTP-dependent manner. Interacts (via C-terminal region and phosphorylated form) with MAPK1/ERK2 (via phosphorylated form); the interaction requires dimerization of MAPK1/ERK2 and increases following EGF stimulation. Interacts with MAPK3/ERK1; the interaction increases following EGF stimulation. Interacts (via coiled coil region) with NUP153; the interaction is direct. Interacts with HSF1; the interaction increases in a stress-responsive manner and stimulates export of stress-induced HSP70 mRNA. Interacts with huntingtin/HTT; the interaction is inhibited by aggregated huntingtin/HTT forms with expanded polyglutamine stretch. Interacts with MAD1L1 (via N-terminal region), MAD2L1, and TTK; the interactions occurs in a microtubule-independent manner. Interacts (via middle region) with DYNLL1. Interacts with DCTN1, dynein, NUP153 and tubulin. Interacts with MTA1. Interacts with IFI204 (via C-terminal region). Interacts with IFI203. Interacts with ZC3HC1; this interaction mediates ZC3HC1 nuclear envelopes (NE)-association but also required for proper positioning of a substantial amount of TPR at the nuclear basket (NB). In terms of processing, phosphorylated. Phosphorylation occurs on serine and threonine residues (comprised in the C-terminal region) by MAPK1/ERK2 and stabilizes the interaction between these two proteins. Expressed in the heart, liver, kidney, spleen, lung and skeletal muscles.

The protein localises to the nucleus. The protein resides in the nucleus membrane. It is found in the nucleus envelope. It localises to the nuclear pore complex. Its subcellular location is the cytoplasm. The protein localises to the cytoskeleton. The protein resides in the spindle. It is found in the chromosome. It localises to the centromere. Its subcellular location is the kinetochore. Its function is as follows. Component of the nuclear pore complex (NPC), a complex required for the trafficking across the nuclear envelope. Functions as a scaffolding element in the nuclear phase of the NPC essential for normal nucleocytoplasmic transport of proteins and mRNAs, plays a role in the establishment of nuclear-peripheral chromatin compartmentalization in interphase, and in the mitotic spindle checkpoint signaling during mitosis. Involved in the quality control and retention of unspliced mRNAs in the nucleus; in association with NUP153, regulates the nuclear export of unspliced mRNA species bearing constitutive transport element (CTE) in a NXF1- and KHDRBS1-independent manner. Negatively regulates both the association of CTE-containing mRNA with large polyribosomes and translation initiation. Does not play any role in Rev response element (RRE)-mediated export of unspliced mRNAs. Implicated in nuclear export of mRNAs transcribed from heat shock gene promoters; associates both with chromatin in the HSP70 promoter and with mRNAs transcribed from this promoter under stress-induced conditions. Plays a limited role in the regulation of nuclear protein export. Modulates the nucleocytoplasmic transport of activated MAPK1/ERK2 and huntingtin/HTT and may serve as a docking site for the XPO1/CRM1-mediated nuclear export complex. Also plays a role as a structural and functional element of the perinuclear chromatin distribution; involved in the formation and/or maintenance of NPC-associated perinuclear heterochromatin exclusion zones (HEZs). Finally, acts as a spatial regulator of the spindle-assembly checkpoint (SAC) response ensuring a timely and effective recruitment of spindle checkpoint proteins like MAD1L1 and MAD2L1 to unattached kinetochore during the metaphase-anaphase transition before chromosome congression. Its N-terminus is involved in activation of oncogenic kinases. This Mus musculus (Mouse) protein is Nucleoprotein TPR.